Reading from the N-terminus, the 316-residue chain is L-lactate dehydrogenase 3 (316 aa).

4 residues coordinate NAD(+): valine 16, aspartate 37, arginine 42, and tyrosine 68. Arginine 91 contributes to the substrate binding site. Residues serine 104, 121–123, and threonine 146 contribute to the NAD(+) site; that span reads ASN. 123-126 lines the substrate pocket; it reads NPVD. 151–154 is a substrate binding site; sequence DSSR. Beta-D-fructose 1,6-bisphosphate contacts are provided by arginine 156 and histidine 171. Histidine 178 functions as the Proton acceptor in the catalytic mechanism. Threonine 233 contacts substrate.

The protein belongs to the LDH/MDH superfamily. LDH family. In terms of assembly, homotetramer.

Its subcellular location is the cytoplasm. It carries out the reaction (S)-lactate + NAD(+) = pyruvate + NADH + H(+). It participates in fermentation; pyruvate fermentation to lactate; (S)-lactate from pyruvate: step 1/1. Allosterically activated by fructose 1,6-bisphosphate (FBP). Catalyzes the conversion of lactate to pyruvate. This chain is L-lactate dehydrogenase 3, found in Bacillus thuringiensis subsp. konkukian (strain 97-27).